We begin with the raw amino-acid sequence, 184 residues long: Photosystem I assembly protein Ycf4 (184 aa).

2 helical membrane-spanning segments follow: residues 22–42 (FCWAFILFLGSLGFLLVGTSS) and 57–77 (IIFFPQGIVMSFYGIAGLFIS).

This sequence belongs to the Ycf4 family.

The protein resides in the plastid. Its subcellular location is the chloroplast thylakoid membrane. In terms of biological role, seems to be required for the assembly of the photosystem I complex. The protein is Photosystem I assembly protein Ycf4 of Arabis hirsuta (Hairy rock-cress).